The primary structure comprises 157 residues: Ribosome maturation factor RimP (157 aa).

This sequence belongs to the RimP family.

Its subcellular location is the cytoplasm. Its function is as follows. Required for maturation of 30S ribosomal subunits. The protein is Ribosome maturation factor RimP of Petrotoga mobilis (strain DSM 10674 / SJ95).